Here is a 1454-residue protein sequence, read N- to C-terminus: E3 ubiquitin-protein ligase substrate receptor MMS22 (1454 aa).

Residues 159-178 (NSSVQSQRYDSDEEIPKKRH) are disordered. The interval 1201-1454 (YDEGDISRNF…SEPFKTFKNT (254 aa)) is required for interaction with MMS1.

Belongs to the MMS22 family. As to quaternary structure, component of a cullin-RING ligase (CRL) composed of 4 subunits: the RING protein HRT1, the cullin RTT101, a linker protein MMS1, and the substrate receptor MMS22. This complex further interacts with RTT107 and CTF4 to form RTT101-MMS1-MMS22-RTT107 and RTT101-MMS1-MMS22-CTF4 complexes respectively. Interacts (via C-ter) with MMS1 (via N-ter). Interacts with RTT107.

It is found in the nucleus. In terms of biological role, substrate targeting component of a cullin-RING-based E3 ubiquitin-protein ligase complex RTT101(MMS1-MMS22). RTT101(MMS1-MMS22) promotes fork progression through damaged DNA or natural pause sites by stabilizing replication proteins like the replication fork-pausing complex (FPC) and leading-strand polymerase at stalled replication forks. RTT101(MMS1-MMS22) ubiquitinates the acetylated histones H3K56ac-H4 at lysine residues H3K121, H3K122 and H3K125. Ubiquitination is required for efficient histone deposition during replication-coupled nucleosome assembly, probably by facilitating the transfer of H3-H4 from ASF1 to other chaperones involved in histone deposition. The polypeptide is E3 ubiquitin-protein ligase substrate receptor MMS22 (MMS22) (Saccharomyces cerevisiae (strain ATCC 204508 / S288c) (Baker's yeast)).